The primary structure comprises 444 residues: UDP-N-acetylmuramate--L-alanine ligase (444 aa).

Residue 111-117 (GAHGKTS) coordinates ATP.

The protein belongs to the MurCDEF family.

Its subcellular location is the cytoplasm. The catalysed reaction is UDP-N-acetyl-alpha-D-muramate + L-alanine + ATP = UDP-N-acetyl-alpha-D-muramoyl-L-alanine + ADP + phosphate + H(+). The protein operates within cell wall biogenesis; peptidoglycan biosynthesis. In terms of biological role, cell wall formation. The polypeptide is UDP-N-acetylmuramate--L-alanine ligase (Leuconostoc citreum (strain KM20)).